The primary structure comprises 546 residues: Chaperonin GroEL 1 (546 aa).

ATP is bound by residues Thr-30–Pro-33, Lys-51, Asp-87–Thr-91, Gly-415, Asn-479–Ala-481, and Asp-495.

This sequence belongs to the chaperonin (HSP60) family. In terms of assembly, forms a cylinder of 14 subunits composed of two heptameric rings stacked back-to-back. Interacts with the co-chaperonin GroES.

Its subcellular location is the cytoplasm. It catalyses the reaction ATP + H2O + a folded polypeptide = ADP + phosphate + an unfolded polypeptide.. In terms of biological role, together with its co-chaperonin GroES, plays an essential role in assisting protein folding. The GroEL-GroES system forms a nano-cage that allows encapsulation of the non-native substrate proteins and provides a physical environment optimized to promote and accelerate protein folding. In Paraburkholderia xenovorans (strain LB400), this protein is Chaperonin GroEL 1.